A 207-amino-acid polypeptide reads, in one-letter code: Probable glutathione S-transferase 5 (207 aa).

Residues 2 to 81 (VSYKLTYFNG…FLAREFKLNG (80 aa)) enclose the GST N-terminal domain. Glutathione contacts are provided by residues Tyr-8, Trp-39, Lys-43, 51-53 (GQL), and 65-66 (QS). The 125-residue stretch at 83–207 (TAWEEAQVNS…WIETRPVTPF (125 aa)) folds into the GST C-terminal domain.

The protein belongs to the GST superfamily. Sigma family.

The enzyme catalyses RX + glutathione = an S-substituted glutathione + a halide anion + H(+). In terms of biological role, conjugation of reduced glutathione to a wide number of exogenous and endogenous hydrophobic electrophiles. May play a role in the detoxification of reactive oxygen species produced during pathogenic bacterial infection. The protein is Probable glutathione S-transferase 5 (gst-5) of Caenorhabditis elegans.